The primary structure comprises 356 residues: MTRMDHRSIISDTTQYFESNEPLQLELGGELPGVRVAYRTWGTLNAEKSNVILVCHALTGNADADSWWCGMFGEGRAFDETRDFIVCSNVLGSCYGTTGPMSVNPLSGRHYGPDFPRITIRDMVNVQRLLLRSLGIDRIRLIVGASLGGMQVLEWGAMYPEMAGALMPMGVSGRHSAWCIAQSEAQRQAIAADAEWQDGWYDPEVQPRKGLAAARMMAMCTYRCFENYQQRFGRKQREDGLFEAESYVRHQGDKLVGRFDANTYITLTRAMDMHDLGRGRDSYEAALGALKMPVEILSIDSDVLYPRQEQEELARLIPGSRLLFLDEPYGHDAFLIDTETVSRMVCEFKRQLIVDN.

One can recognise an AB hydrolase-1 domain in the interval 50 to 335; it reads NVILVCHALT…DEPYGHDAFL (286 aa). The active-site Nucleophile is the Ser146. A substrate-binding site is contributed by Arg215. Residues Asp302 and His331 contribute to the active site. Asp332 is a binding site for substrate.

This sequence belongs to the AB hydrolase superfamily. MetX family. In terms of assembly, homodimer.

The protein localises to the cytoplasm. The catalysed reaction is L-homoserine + acetyl-CoA = O-acetyl-L-homoserine + CoA. It functions in the pathway amino-acid biosynthesis; L-methionine biosynthesis via de novo pathway; O-acetyl-L-homoserine from L-homoserine: step 1/1. In terms of biological role, transfers an acetyl group from acetyl-CoA to L-homoserine, forming acetyl-L-homoserine. The sequence is that of Homoserine O-acetyltransferase from Chlorobaculum tepidum (strain ATCC 49652 / DSM 12025 / NBRC 103806 / TLS) (Chlorobium tepidum).